Consider the following 1846-residue polypeptide: C2 domain-containing protein (1846 aa).

The disordered stretch occupies residues 16–36; it reads NTEKEEGKNAEINENNDPNTQ. Residues 17–26 are compositionally biased toward basic and acidic residues; it reads TEKEEGKNAE. Residues 27–36 are compositionally biased toward polar residues; sequence INENNDPNTQ. The 127-residue stretch at 497 to 623 folds into the C2 domain; the sequence is VPRYRQRGDI…FNEKNVRRNK (127 aa). 2 stretches are compositionally biased toward basic and acidic residues: residues 1193–1211 and 1230–1243; these read DEHTDIDTEKKKHEKDNYK and KDDHHHITDKKVSK. Disordered stretches follow at residues 1193–1244, 1346–1370, 1456–1635, 1652–1692, and 1827–1846; these read DEHT…VSKS, KYTINEKRDDIKTKKKRSKEKKKQD, KNER…KKRV, NEKM…NNER, and EEPSSKKSPQKKKIVIVRKN. Residues 1349 to 1506 adopt a coiled-coil conformation; that stretch reads INEKRDDIKT…DENMKEEQKM (158 aa). 4 stretches are compositionally biased toward basic and acidic residues: residues 1456–1474, 1481–1629, 1652–1663, and 1670–1692; these read KNERNKMEKSYKRMIQKDK, ESRD…MRRE, NEKMKKKEEKEE, and KEDIEDKYKIGKEASLDENNNER. Positions 1834–1846 are enriched in basic residues; that stretch reads SPQKKKIVIVRKN.

The protein resides in the membrane. In terms of biological role, binds calcium and phospholipids. Regulates microneme secretion. The protein is C2 domain-containing protein of Plasmodium falciparum (isolate 3D7).